The chain runs to 109 residues: Cell division protein ZapA (109 aa).

Residues 21–97 (PDQRDALNQA…QTIEQALLDQ (77 aa)) adopt a coiled-coil conformation.

Belongs to the ZapA family. Type 1 subfamily. In terms of assembly, homodimer. Interacts with FtsZ.

The protein localises to the cytoplasm. Its function is as follows. Activator of cell division through the inhibition of FtsZ GTPase activity, therefore promoting FtsZ assembly into bundles of protofilaments necessary for the formation of the division Z ring. It is recruited early at mid-cell but it is not essential for cell division. The polypeptide is Cell division protein ZapA (Salmonella agona (strain SL483)).